A 212-amino-acid polypeptide reads, in one-letter code: Methylthioribulose-1-phosphate dehydratase (212 aa).

Zn(2+)-binding residues include His-103 and His-105.

Belongs to the aldolase class II family. MtnB subfamily. Zn(2+) is required as a cofactor.

The catalysed reaction is 5-(methylsulfanyl)-D-ribulose 1-phosphate = 5-methylsulfanyl-2,3-dioxopentyl phosphate + H2O. The protein operates within amino-acid biosynthesis; L-methionine biosynthesis via salvage pathway; L-methionine from S-methyl-5-thio-alpha-D-ribose 1-phosphate: step 2/6. Its function is as follows. Catalyzes the dehydration of methylthioribulose-1-phosphate (MTRu-1-P) into 2,3-diketo-5-methylthiopentyl-1-phosphate (DK-MTP-1-P). In Sorangium cellulosum (strain So ce56) (Polyangium cellulosum (strain So ce56)), this protein is Methylthioribulose-1-phosphate dehydratase.